The following is a 125-amino-acid chain: Fumarate reductase subunit D (125 aa).

Helical transmembrane passes span 30–50 (FAMITPVTVLVLGILVPMGVI), 60–80 (VVSFATSIIGALFIIATLALP), and 105–125 (IACYAIAGLISALAVVFIFML).

This sequence belongs to the FrdD family. Part of an enzyme complex containing four subunits: a flavoprotein (FrdA), an iron-sulfur protein (FrdB), and two hydrophobic anchor proteins (FrdC and FrdD).

The protein localises to the cell inner membrane. Anchors the catalytic components of the fumarate reductase complex to the cell membrane, binds quinones. This is Fumarate reductase subunit D from Vibrio vulnificus (strain YJ016).